The chain runs to 1082 residues: MFPAAVGVLWQSGLRDPTPPGGPHGIEGLSLAFEKPSPVTALTQELRFATTMTGGVSLAIWMAGVTREINLLAQASQWRRLGGTFPTNSQLTNESAASLRLYAQLIDLLDMVVDVDILSGTSAGGINAALLASSRVTGSDLGGIRDLWLDLGALTELLRDPRDKKTPSLLYGDERIFAALAKRLPKLATGPFPPTTFPEAARTPSTTLYITTTLLAGETSRFTDSFGTLVQDVDLRGLFTFTETDLARPDTAPALALAARSSASFPLAFEPSFLPFTKGTAKKGEVPARPAMAPFTSLTRPHWVSDGGLLDNRPIGVLFKRIFDRPARRPVRRVLLFVVPSSGPAPDPMHEPPPDNVDEPLGLIDGLLKGLAAVTTQSIAADLRAIRAHQDCMEARTDAKLRLAELAATLRNGTRLLTPSLLTDYRTREATKQAQTLTSALLRRLSTCPPESGPATESLPKSWSAELTVGGDADKVCRQQITATILLSWSQPTAQPLPQSPAELARFGQPAYDLAKGCALTVIRAAFQLARSDADIAALAEVTEAIHRAWRPTASSDLSVLVRTMCSRPAIRQGSLENAADQLAADYLQQSTVPGDAWERLGAALVNAYPTLTQLAASASADSGAPTDSLLARDHVAAGQLETYLSYLGTYPGRADDSRDAPTMAWKLFDLATTQRAMLPADAEIEQGLELVQVSADTRSLLAPDWQTAQQKLTGMRLHHFGAFYKRSWRANDWMWGRLDGAGWLVHVLLDPRRVRWIVGERADTNGPQSGAQWFLGKLKELGAPDFPSPGYPLPAVGGGPAQHLTEDMLLDELGFLDDPAKPLPASIPWTALWLSQAWQQRVLEEELDGLANTVLDPQPGKLPDWSPTSSRTWATKVLAAHPGDAKYALLNENPIAGETFASDKGSPLMAHTVAKAAATAAGAAGSVRQLPSVLKPPLITLRTLTLSGYRVVSLTKGIARSTIIAGALLLVLGVAAAIQSVTVFGVTGLIAAGTGGLLVVLGTWQVSGRLLFALLSFSVVGAVLALATPVVREWLFGTQQQPGWVGTHAYWLGAQWWHPLVVVGLIALVAIMIAAATPGRR.

The PNPLA domain occupies 50 to 319; that stretch reads TTMTGGVSLA…LDNRPIGVLF (270 aa). Residues 120 to 124 carry the GXSXG motif; that stretch reads GTSAG. Catalysis depends on Ser122, which acts as the Nucleophile. Catalysis depends on Asp306, which acts as the Proton acceptor. Positions 306–308 match the DGA/G motif; it reads DGG. A run of 4 helical transmembrane segments spans residues 959–979, 982–1002, 1012–1032, and 1057–1077; these read IARSTIIAGALLLVLGVAAAI, VTVFGVTGLIAAGTGGLLVVL, LFALLSFSVVGAVLALATPVV, and WWHPLVVVGLIALVAIMIAAA.

It is found in the cell membrane. This is an uncharacterized protein from Mycobacterium tuberculosis (strain ATCC 25618 / H37Rv).